The primary structure comprises 309 residues: MTDAATAPTSIDLRAEYEGSGAKEVLEELDRELIGLKPVKDRIRETAALLLVERARQKLGLAHETPTLHMSFTGNPGTGKTTVALKMAGLLHRLGYVRKGHLVSVTRDDLVGQYIGHTAPKTKEVLKRAMGGVLFIDEAYYLYRPDNERDYGQEAIEILLQVMENNRDDLVVILAGYADRMENFFQSNPGFRSRIAHHIEFPDYSDEELFEIAGHMLDDQNYQMTPEAETALRAYIGLRRNQPHFANARSIRNALDRARLRQANRLFTASSGPLDARALSTMAEEDIRASRVFKGGLDSERRAAEALAR.

74–81 contributes to the ATP binding site; it reads GNPGTGKT.

Belongs to the CbxX/CfxQ family. Forms homohexameric rings. The oligomeric transition is triggered by ribulose 1,5-biphosphate.

ATPase involved in the activation of red-type RuBisCo (ribulose-1,5-bisphosphate carboxylase/oxygenase), which tends to form inactive complexes with its substrate ribulose 1,5-bisphosphate (RuBP). Catalyzes the release of RuBP from inhibited RuBisCo in an ATP-dependent manner. Activation of RuBisCO involves the ATP-dependent carboxylation of the epsilon-amino group of lysine leading to a carbamate structure. The chain is Protein CbbX (cbbX) from Cereibacter sphaeroides (Rhodobacter sphaeroides).